We begin with the raw amino-acid sequence, 336 residues long: HTH-type transcriptional repressor PurR (336 aa).

One can recognise an HTH lacI-type domain in the interval 2–56 (ATIKDVAKLAGVSTTTVSHVINKTRFVAEDTSKAVWDAIQQLNYSPSAVARSLKV). Positions 4-23 (IKDVAKLAGVSTTTVSHVIN) form a DNA-binding region, H-T-H motif. The DNA-binding element occupies 48–56 (SAVARSLKV). Hypoxanthine-binding residues include tyrosine 73, lysine 188, phenylalanine 219, and aspartate 273.

As to quaternary structure, homodimer.

The protein operates within purine metabolism; purine nucleotide biosynthesis [regulation]. Its function is as follows. Is the main repressor of the genes involved in the de novo synthesis of purine nucleotides, regulating purB, purC, purEK, purF, purHD, purL, purMN and guaBA expression. PurR is allosterically activated to bind its cognate DNA by binding the purine corepressors, hypoxanthine or guanine, thereby effecting transcription repression. The polypeptide is HTH-type transcriptional repressor PurR (Actinobacillus pleuropneumoniae serotype 5b (strain L20)).